We begin with the raw amino-acid sequence, 605 residues long: Protein Spindly (605 aa).

At M1 the chain carries N-acetylmethionine. Residues 2–442 (EADIITNLRC…ELKLKYEPEE (441 aa)) adopt a coiled-coil conformation. A phosphoserine mark is found at S513, S515, and S555. The interval 544-580 (ALSERSGNTPNSPRLAAESKLQTEVKEGKETSSKLEK) is disordered. The segment covering 564–580 (LQTEVKEGKETSSKLEK) has biased composition (basic and acidic residues).

It belongs to the Spindly family. Interacts with KNTC1 and ZW10. These interactions appear weak and may be transient or indirect. Interacts with dynein intermediate chain and dynactin (DCTN1). Interacts with the catalytically active form of USP45. Post-translationally, monoubiquitinated with'Lys-48' linkage. Deubiquitinated by USP45.

The protein resides in the cytoplasm. It is found in the cytoskeleton. The protein localises to the microtubule organizing center. It localises to the centrosome. Its subcellular location is the chromosome. The protein resides in the centromere. It is found in the kinetochore. The protein localises to the nucleus. It localises to the spindle pole. Its function is as follows. Required for the localization of dynein and dynactin to the mitotic kintochore. Dynein is believed to control the initial lateral interaction between the kinetochore and spindle microtubules and to facilitate the subsequent formation of end-on kinetochore-microtubule attachments mediated by the NDC80 complex. Also required for correct spindle orientation. Does not appear to be required for the removal of spindle assembly checkpoint (SAC) proteins from the kinetochore upon bipolar spindle attachment. Acts as an adapter protein linking the dynein motor complex to various cargos and converts dynein from a non-processive to a highly processive motor in the presence of dynactin. Facilitates the interaction between dynein and dynactin and activates dynein processivity (the ability to move along a microtubule for a long distance without falling off the track). Plays a role in cell migration. This chain is Protein Spindly, found in Homo sapiens (Human).